Reading from the N-terminus, the 331-residue chain is Serpentine receptor class alpha-1 (331 aa).

A run of 7 helical transmembrane segments spans residues 22 to 42 (FAVF…VIAV), 57 to 77 (IILV…AIIS), 104 to 124 (YTEV…GILI), 143 to 163 (VGII…QIII), 189 to 209 (FLFI…AVMF), 238 to 258 (ICVV…GVLI), and 274 to 294 (LITW…ILIF).

This sequence belongs to the nematode receptor-like protein sra family.

It is found in the membrane. This chain is Serpentine receptor class alpha-1 (sra-1), found in Caenorhabditis elegans.